The chain runs to 781 residues: Homeobox protein SIX4 (781 aa).

Polar residues predominate over residues 1 to 10 (MSSSSPTGQI). Disordered regions lie at residues 1–55 (MSSS…PLEP) and 270–321 (WFKN…GITN). Position 2 is an N-acetylserine (S2). Residues 223 to 282 (GEETVYCFKEKSRNALKELYKQNRYPSPAEKRHLAKITGLSLTQVSNWFKNRRQRDRNPS) constitute a DNA-binding region (homeobox). 2 stretches are compositionally biased toward basic and acidic residues: residues 278–290 (DRNPSETQSKSES) and 299–308 (ESSKGHEDLS). Position 640 is a phosphoserine (S640).

Belongs to the SIX/Sine oculis homeobox family. Interacts with EYA3; acts cooperatively with EYA3 to transactivate target genes through interaction and nuclear translocation of EYA3 protein.

The protein localises to the nucleus. It localises to the cytoplasm. Functionally, transcriptional regulator which can act as both a transcriptional repressor and activator by binding a DNA sequence on these target genes and is involved in processes like cell differentiation, cell migration and cell survival. Transactivates gene expression by binding a 5'-[CAT]A[CT][CT][CTG]GA[GAT]-3' motif present in the Trex site and a 5'-TCA[AG][AG]TTNC-3' motif present in the MEF3 site of the muscle-specific genes enhancer. Acts cooperatively with EYA proteins to transactivate their target genes through interaction and nuclear translocation of EYA protein. Acts synergistically with SIX1 to regulate target genes involved in formation of various organs, including muscle, kidney, gonad, ganglia, olfactory epithelium and cranial skeleton. Plays a role in several important steps of muscle development. Controls the genesis of hypaxial myogenic progenitors in the dermomyotome by transactivating PAX3 and the delamination and migration of the hypaxial precursors from the ventral lip to the limb buds through the transactivation of PAX3, MET and LBX1. Controls myoblast determination by transactivating MYF5, MYOD1 and MYF6. Controls somitic differentiation in myocyte through MYOG transactivation. Plays a role in synaptogenesis and sarcomere organization by participating in myofiber specialization during embryogenesis by activating fast muscle program in the primary myotome resulting in an up-regulation of fast muscle genes, including ATP2A1, MYL1 and TNNT3. Simultaneously, is also able to activate inhibitors of slow muscle genes, such as SOX6, HRASLS, and HDAC4, thereby restricting the activation of the slow muscle genes. During muscle regeneration, negatively regulates differentiation of muscle satellite cells through down-regulation of MYOG expression. During kidney development regulates the early stages of metanephros development and ureteric bud formation through regulation of GDNF, SALL1, PAX8 and PAX2 expression. Plays a role in gonad development by regulating both testis determination and size determination. In gonadal sex determination, transactivates ZFPM2 by binding a MEF3 consensus sequence, resulting in SRY up-regulation. In gonadal size determination, transactivates NR5A1 by binding a MEF3 consensus sequence resulting in gonadal precursor cell formation regulation. During olfactory development mediates the specification and patterning of olfactory placode through fibroblast growth factor and BMP4 signaling pathways and also regulates epithelial cell proliferation during placode formation. Promotes survival of sensory neurons during early trigeminal gangliogenesis. In the developing dorsal root ganglia, up-regulates SLC12A2 transcription. Regulates early thymus/parathyroid organogenesis through regulation of GCM2 and FOXN1 expression. Forms gustatory papillae during development of the tongue. Also plays a role during embryonic cranial skeleton morphogenesis. This is Homeobox protein SIX4 (SIX4) from Homo sapiens (Human).